The primary structure comprises 352 residues: 4-hydroxy-2-oxovalerate aldolase 4 (352 aa).

A Pyruvate carboxyltransferase domain is found at 9-261; sequence IRVTDSSLRD…RTGIDTLKII (253 aa). 17-18 serves as a coordination point for substrate; it reads RD. Residue Asp-18 coordinates Mn(2+). The active-site Proton acceptor is His-21. Substrate is bound by residues Ser-171 and His-200. His-200 and His-202 together coordinate Mn(2+). Position 291 (Tyr-291) interacts with substrate.

The protein belongs to the 4-hydroxy-2-oxovalerate aldolase family.

The enzyme catalyses (S)-4-hydroxy-2-oxopentanoate = acetaldehyde + pyruvate. The chain is 4-hydroxy-2-oxovalerate aldolase 4 from Rhodococcus jostii (strain RHA1).